We begin with the raw amino-acid sequence, 89 residues long: Small ribosomal subunit protein uS15 (89 aa).

The protein belongs to the universal ribosomal protein uS15 family. As to quaternary structure, part of the 30S ribosomal subunit. Forms a bridge to the 50S subunit in the 70S ribosome, contacting the 23S rRNA.

In terms of biological role, one of the primary rRNA binding proteins, it binds directly to 16S rRNA where it helps nucleate assembly of the platform of the 30S subunit by binding and bridging several RNA helices of the 16S rRNA. Functionally, forms an intersubunit bridge (bridge B4) with the 23S rRNA of the 50S subunit in the ribosome. This is Small ribosomal subunit protein uS15 from Parafrankia sp. (strain EAN1pec).